Here is a 365-residue protein sequence, read N- to C-terminus: Eukaryotic translation initiation factor 3 subunit H (365 aa).

Residues 15 to 166 (ILLDSLVVMK…IRAWRLSTAA (152 aa)) enclose the MPN domain. A disordered region spans residues 276–295 (KRQQENESRLARGDPPLPMD). The span at 277–287 (RQQENESRLAR) shows a compositional bias: basic and acidic residues.

Belongs to the eIF-3 subunit H family. As to quaternary structure, component of the eukaryotic translation initiation factor 3 (eIF-3) complex.

The protein localises to the cytoplasm. Its function is as follows. Component of the eukaryotic translation initiation factor 3 (eIF-3) complex, which is involved in protein synthesis of a specialized repertoire of mRNAs and, together with other initiation factors, stimulates binding of mRNA and methionyl-tRNAi to the 40S ribosome. The eIF-3 complex specifically targets and initiates translation of a subset of mRNAs involved in cell proliferation. In Caenorhabditis briggsae, this protein is Eukaryotic translation initiation factor 3 subunit H.